Consider the following 231-residue polypeptide: LexA repressor (231 aa).

A DNA-binding region (H-T-H motif) is located at residues R31–Q51. Active-site for autocatalytic cleavage activity residues include S148 and K185.

This sequence belongs to the peptidase S24 family. In terms of assembly, homodimer.

The enzyme catalyses Hydrolysis of Ala-|-Gly bond in repressor LexA.. Represses a number of genes involved in the response to DNA damage (SOS response), including recA and lexA. In the presence of single-stranded DNA, RecA interacts with LexA causing an autocatalytic cleavage which disrupts the DNA-binding part of LexA, leading to derepression of the SOS regulon and eventually DNA repair. This chain is LexA repressor, found in Leptothrix cholodnii (strain ATCC 51168 / LMG 8142 / SP-6) (Leptothrix discophora (strain SP-6)).